The following is a 287-amino-acid chain: UBX domain-containing protein 1 (287 aa).

The 42-residue stretch at 1–42 (MAECSTLESLIEMGFSPSRAEKALAATGNQGIEPAMDWLVEH) folds into the UBA domain. The disordered stretch occupies residues 44-207 (DDPDIDEPSV…VQEPPTKKEY (164 aa)). Basic and acidic residues-rich tracts occupy residues 72–114 (CEER…EQEK) and 129–169 (KIQE…ERAR). The stretch at 72 to 164 (CEERLPLTEE…RVREKIARDK (93 aa)) forms a coiled coil. The segment covering 176 to 197 (SEPISPPAEASIPATTPSPSSP) has biased composition (low complexity). In terms of domain architecture, UBX spans 205 to 284 (KEYDQCRIQV…GLVPSAVLIV (80 aa)).

It is found in the cytoplasm. Functionally, component of a complex required to couple deglycosylation and proteasome-mediated degradation of misfolded proteins in the endoplasmic reticulum that are retrotranslocated in the cytosol. Involved in ubiquitin-proteasome systems. The chain is UBX domain-containing protein 1 (ubxn1) from Xenopus tropicalis (Western clawed frog).